The sequence spans 649 residues: Protein mitoshell (649 aa).

Basic and acidic residues predominate over residues 167 to 176 (LRSEARKPRP). Disordered stretches follow at residues 167-193 (LRSE…ESGA), 389-414 (HGPS…EPTS), and 485-512 (ALPS…VRSY). Residues 177–191 (ESVVPEESSISSLES) are compositionally biased toward low complexity. Polar residues-rich tracts occupy residues 393-414 (AFST…EPTS) and 485-503 (ALPS…SPQS).

In terms of biological role, required for male meiotic cytokinesis through its involvement in the regulation of mitochondrial aggregation and fusion, astral spindle assembly and contractile ring formation. This chain is Protein mitoshell, found in Drosophila melanogaster (Fruit fly).